The chain runs to 351 residues: Anthranilate phosphoribosyltransferase (351 aa).

5-phospho-alpha-D-ribose 1-diphosphate is bound by residues G90, 93–94, T98, 100–103, 118–126, and S130; these read GD, NIST, and KHGNRSASG. Residue G90 coordinates anthranilate. S102 serves as a coordination point for Mg(2+). N121 contributes to the anthranilate binding site. Position 176 (R176) interacts with anthranilate. Mg(2+)-binding residues include D235 and E236.

This sequence belongs to the anthranilate phosphoribosyltransferase family. As to quaternary structure, homodimer. Requires Mg(2+) as cofactor.

The catalysed reaction is N-(5-phospho-beta-D-ribosyl)anthranilate + diphosphate = 5-phospho-alpha-D-ribose 1-diphosphate + anthranilate. It functions in the pathway amino-acid biosynthesis; L-tryptophan biosynthesis; L-tryptophan from chorismate: step 2/5. Its function is as follows. Catalyzes the transfer of the phosphoribosyl group of 5-phosphorylribose-1-pyrophosphate (PRPP) to anthranilate to yield N-(5'-phosphoribosyl)-anthranilate (PRA). The sequence is that of Anthranilate phosphoribosyltransferase from Prochlorococcus marinus (strain MIT 9313).